The following is a 296-amino-acid chain: MSSLRQIAFYGKGGIGKSTTSQNTLAALAEMGHRILIVGCDPKADSTRLILHAKAQDTILSLAAAAGSVEDLELEEVMKIGYRDIRCVESGGPEPGVGCAGRGVITSINFLEENGAYEDIDYVSYDVLGDVVCGGFAMPIRENKAQEIYIVMSGEMMAMYAANNISKGILKYANSGGVRLGGLVCNERQTDKELELAENLAKKLGTQLIYFVPRDNIVQHAELRRMTVIEYAPDSVQANHYRNLAERVHNNGGKGIIPTPITMDELEDMLMEHGIMKTVDETQVGKTAAELAALSA.

Residue 11 to 18 (GKGGIGKS) coordinates ATP. Cys-99 contacts [4Fe-4S] cluster. Position 102 is an ADP-ribosylarginine; by dinitrogenase reductase ADP-ribosyltransferase (Arg-102). Residue Cys-133 coordinates [4Fe-4S] cluster.

Belongs to the NifH/BchL/ChlL family. Homodimer. It depends on [4Fe-4S] cluster as a cofactor. In terms of processing, the reversible ADP-ribosylation of Arg-102 inactivates the nitrogenase reductase and regulates nitrogenase activity.

It carries out the reaction N2 + 8 reduced [2Fe-2S]-[ferredoxin] + 16 ATP + 16 H2O = H2 + 8 oxidized [2Fe-2S]-[ferredoxin] + 2 NH4(+) + 16 ADP + 16 phosphate + 6 H(+). Its function is as follows. The key enzymatic reactions in nitrogen fixation are catalyzed by the nitrogenase complex, which has 2 components: the iron protein and the molybdenum-iron protein. In Azorhizobium caulinodans (strain ATCC 43989 / DSM 5975 / JCM 20966 / LMG 6465 / NBRC 14845 / NCIMB 13405 / ORS 571), this protein is Nitrogenase iron protein 1 (nifH1).